A 358-amino-acid chain; its full sequence is Protein RecA (358 aa).

67–74 (GPESSGKT) lines the ATP pocket.

The protein belongs to the RecA family.

It is found in the cytoplasm. Can catalyze the hydrolysis of ATP in the presence of single-stranded DNA, the ATP-dependent uptake of single-stranded DNA by duplex DNA, and the ATP-dependent hybridization of homologous single-stranded DNAs. It interacts with LexA causing its activation and leading to its autocatalytic cleavage. The chain is Protein RecA from Xenorhabdus bovienii (Xenorhabdus nematophila subsp. bovienii).